The chain runs to 788 residues: Mediator of RNA polymerase II transcription subunit 15 (788 aa).

Positions 9-73 (DWRSTAFRQK…IHFRDIHNKK (65 aa)) are interaction with SREBF1. Disordered stretches follow at residues 95-139 (GAAG…MAPH) and 260-329 (QQQA…PLVS). Gly residues predominate over residues 108–117 (QSLGGMGSLG). A compositionally biased stretch (low complexity) spans 260–269 (QQQALQAQPP). A compositionally biased stretch (pro residues) spans 270–284 (IQQPPMQQPQPPPSQ). Composition is skewed to low complexity over residues 285-294 (ALPQQLQQMH) and 309-329 (PVAQ…PLVS). Position 349 is an asymmetric dimethylarginine (Arg349). The segment at 412–530 (SSSIPLGRQP…PAGSSQAEEQ (119 aa)) is disordered. Positions 426–446 (SQSSLPMLSSPSPGQQVQTPQ) are enriched in low complexity. The span at 447-459 (SMPPPPQPSPQPG) shows a compositional bias: pro residues. Residues 460-482 (QPSSQPNSNVSSGPAPSPSSFLP) are compositionally biased toward low complexity. Polar residues-rich tracts occupy residues 493 to 503 (VTARTPQNFSV) and 511 to 529 (TPVN…QAEE). The Nuclear localization signal motif lies at 547-564 (RRMINKIDKNEDRKKDLS). Phosphothreonine is present on Thr603.

This sequence belongs to the Mediator complex subunit 15 family. Component of the Mediator complex, which is composed of MED1, MED4, MED6, MED7, MED8, MED9, MED10, MED11, MED12, MED13, MED13L, MED14, MED15, MED16, MED17, MED18, MED19, MED20, MED21, MED22, MED23, MED24, MED25, MED26, MED27, MED29, MED30, MED31, CCNC, CDK8 and CDC2L6/CDK11. The MED12, MED13, CCNC and CDK8 subunits form a distinct module termed the CDK8 module. Mediator containing the CDK8 module is less active than Mediator lacking this module in supporting transcriptional activation. Individual preparations of the Mediator complex lacking one or more distinct subunits have been variously termed ARC, CRSP, DRIP, PC2, SMCC and TRAP. Interacts with SMAD2, SMAD3, SREBF1 and SREBF2. Interacts with WWTR1. Interacts with TRIM11. Post-translationally, ubiquitinated by TRIM11, leading to proteasomal degradation. Expressed in all tissues examined, including heart, brain, lung, spleen, thymus, pancreas, blood leukocyte and placenta. However, the level of expression varied, with highest expression in the placenta and peripheral blood and lowest in the pancreas and kidney.

The protein resides in the cytoplasm. The protein localises to the nucleus. In terms of biological role, component of the Mediator complex, a coactivator involved in the regulated transcription of nearly all RNA polymerase II-dependent genes. Mediator functions as a bridge to convey information from gene-specific regulatory proteins to the basal RNA polymerase II transcription machinery. Mediator is recruited to promoters by direct interactions with regulatory proteins and serves as a scaffold for the assembly of a functional preinitiation complex with RNA polymerase II and the general transcription factors. Required for cholesterol-dependent gene regulation. Positively regulates the Nodal signaling pathway. In Homo sapiens (Human), this protein is Mediator of RNA polymerase II transcription subunit 15 (MED15).